The chain runs to 134 residues: Phosphomevalonate dehydratase small subunit (134 aa).

Ser62 serves as the catalytic Proton acceptor.

This sequence belongs to the AcnX type II small subunit family. Heterodimer composed of a large subunit (PMDh-L) and a small subunit (PMDh-S).

It catalyses the reaction (R)-5-phosphomevalonate = (2E)-3-methyl-5-phosphooxypent-2-enoate + H2O. The protein operates within isoprenoid biosynthesis; isopentenyl diphosphate biosynthesis via mevalonate pathway. Component of a hydro-lyase that catalyzes the dehydration of mevalonate 5-phosphate (MVA5P) to form trans-anhydromevalonate 5-phosphate (tAHMP). Involved in the archaeal mevalonate (MVA) pathway, which provides fundamental precursors for isoprenoid biosynthesis, such as isopentenyl diphosphate (IPP) and dimethylallyl diphosphate (DMAPP). The polypeptide is Phosphomevalonate dehydratase small subunit (Pyrococcus horikoshii (strain ATCC 700860 / DSM 12428 / JCM 9974 / NBRC 100139 / OT-3)).